The primary structure comprises 765 residues: Putative U-box domain-containing protein 50 (765 aa).

The stretch at 198–391 (QEIENYFQQL…NRRIEFCKER (194 aa)) forms a coiled coil. The 344-residue stretch at 422 to 765 (SDRLRLKSGG…HSKRAAQASS (344 aa)) folds into the Protein kinase domain. ATP is bound by residues 428-436 (KSGGNWTNV) and lysine 449. The U-box domain occupies 688 to 762 (DIPSVFMCPI…QDWHSKRAAQ (75 aa)).

Belongs to the protein kinase superfamily. Ser/Thr protein kinase family.

It carries out the reaction S-ubiquitinyl-[E2 ubiquitin-conjugating enzyme]-L-cysteine + [acceptor protein]-L-lysine = [E2 ubiquitin-conjugating enzyme]-L-cysteine + N(6)-ubiquitinyl-[acceptor protein]-L-lysine.. The protein operates within protein modification; protein ubiquitination. Functionally, functions as an E3 ubiquitin ligase. This Arabidopsis thaliana (Mouse-ear cress) protein is Putative U-box domain-containing protein 50 (PUB50).